Reading from the N-terminus, the 156-residue chain is Endogenous retrovirus group K member 104 Pro protein (156 aa).

The region spanning 21-96 is the Peptidase A2 domain; sequence FEGLVDTEAD…IPLNLWGQDL (76 aa). Residue Asp26 is part of the active site. The 46-residue stretch at 111–156 folds into the G-patch domain; it reads YSPTSQKIMTKMGYIPGKGLGKNEDGIKVPVEAKINQKREGIGYPF.

The protein belongs to the peptidase A2 family. HERV class-II K(HML-2) subfamily. In terms of assembly, active as a homodimer. In terms of processing, autoproteolytically processed at the N-terminus. Expected C-terminal autoprocessing not detected. The sequence shown is that of the processed Pro protein.

The catalysed reaction is Processing at the authentic HIV-1 PR recognition site and release of the mature p17 matrix and the p24 capsid protein, as a result of the cleavage of the -SQNY-|-PIVQ- cleavage site.. Its function is as follows. Retroviral proteases have roles in the processing of the primary translation products and the maturation of the viral particle. Endogenous Pro proteins may have kept, lost or modified their original function during evolution. In Homo sapiens (Human), this protein is Endogenous retrovirus group K member 104 Pro protein (HERV-K104).